The following is a 92-amino-acid chain: Kinetoplastid membrane protein 11C (92 aa).

This sequence belongs to the KMP-11 family. Monomer.

The protein localises to the cytoplasm. It is found in the cytoskeleton. Its subcellular location is the cell projection. The protein resides in the cilium. It localises to the flagellum. Functionally, may be involved in the regulation of the cytoskeleton through interaction with the subpellicular microtubules. May be involved in parasite mobility and attachment to the surface of the host cell. Behaves as a strong immunogen during infection. The sequence is that of Kinetoplastid membrane protein 11C (KMP-11C) from Leishmania infantum.